We begin with the raw amino-acid sequence, 305 residues long: MKVGIIGAGFVGATAAFAMAMRGSCSEIVIVDADNAKAKAQASDIEHAVPFSFAMTVRDGDFQDLKGAKVIIISAGVNQKPGETRLQLLERNANIFRDIVPKVVAIESNAVIVVATNPVDILTSLTEQLAGLPEGQVMGSGTTLDTARFRALIGNELGVDPQHVHAYVIGEHGDSEVFAWSSANVAGLSIPSFCKARQVRWNEEIQSQIADNVRKAAYHIIEGKGATYYGIGAVLARISEALIRNHRAVLTVSANIPEFGVALSLPRLVSGKGIDGLIGVQTNDEERAALERSASVLREALSAIS.

NAD(+) contacts are provided by residues Val-11, Asp-32, Lys-37, and 76–77 (GV). Substrate is bound by residues Gln-79, Arg-85, and 117–120 (NPVD). Residues 115–117 (ATN) and Ser-140 each bind NAD(+). Substrate is bound at residue 145-148 (DTAR). Beta-D-fructose 1,6-bisphosphate contacts are provided by Arg-150 and His-165. His-172 acts as the Proton acceptor in catalysis. Residue Tyr-218 is modified to Phosphotyrosine. Thr-227 is a binding site for substrate.

It belongs to the LDH/MDH superfamily. LDH family. Homotetramer.

Its subcellular location is the cytoplasm. The enzyme catalyses (S)-lactate + NAD(+) = pyruvate + NADH + H(+). The protein operates within fermentation; pyruvate fermentation to lactate; (S)-lactate from pyruvate: step 1/1. Its activity is regulated as follows. Allosterically activated by fructose 1,6-bisphosphate (FBP). Catalyzes the conversion of lactate to pyruvate. This chain is L-lactate dehydrogenase, found in Chloroherpeton thalassium (strain ATCC 35110 / GB-78).